The primary structure comprises 90 residues: Co-chaperonin GroES (90 aa).

This sequence belongs to the GroES chaperonin family. Heptamer of 7 subunits arranged in a ring. Interacts with the chaperonin GroEL.

It is found in the cytoplasm. Its function is as follows. Together with the chaperonin GroEL, plays an essential role in assisting protein folding. The GroEL-GroES system forms a nano-cage that allows encapsulation of the non-native substrate proteins and provides a physical environment optimized to promote and accelerate protein folding. GroES binds to the apical surface of the GroEL ring, thereby capping the opening of the GroEL channel. This chain is Co-chaperonin GroES, found in Borreliella afzelii (strain PKo) (Borrelia afzelii).